A 433-amino-acid polypeptide reads, in one-letter code: MKAIRVGLLGLGTVGSGVVKIIQDHQDKLMHQVGCPVTIKKVLVKDLEKKREVDLPKEVLTTEVYDVIDDPDVDVVIEVIGGVEQTKQYLVDALRSKKHVVTANKDLMAVYGSELLAEAKENGCDIYFEASVAGGIPILRTLEEGLSSDRITKMMGIVNGTTNFILTKMIKEKSPYEEVLKEAQDLGFAEADPTSDVEGLDAARKMAILARLGFSMNVDLEDVKVKGISQITDEDISFSKRLGYTMKLIGIAQRDGSKIEVSVQPTLLPDHHPLSAVHNEFNAVYVYGEAVGETMFYGPGAGSMPTATSVVSDLVAVMKNMRLGVTGNSFVGPQYEKNMKSPSDIYAQQFLRIHVKDEVGSFSKITSVFSERGVSFEKILQLPIKGHDELAEIVIVTHHTSEADFSDILQNLNDLEVVQEVKSTYRVEGNGWS.

2 residues coordinate NADPH: Thr-13 and Val-14. NAD(+)-binding residues include Val-14 and Val-33. Val-14 is a binding site for NADP(+). Positions 45 and 105 each coordinate NADPH. NADP(+) contacts are provided by Lys-45 and Lys-105. Na(+) is bound by residues Glu-129, Val-132, Gly-134, and Ile-136. The NADP(+) site is built by Gly-187 and Glu-190. The L-homoserine site is built by Glu-190 and Asp-201. Residue Lys-205 is the Proton donor of the active site. Gly-302 lines the NADPH pocket. Residue Gly-302 coordinates NAD(+). Residue Gly-302 coordinates NADP(+). One can recognise an ACT domain in the interval 350–426 (FLRIHVKDEV…VVQEVKSTYR (77 aa)).

This sequence belongs to the homoserine dehydrogenase family. As to quaternary structure, homotetramer. Requires a metal cation as cofactor.

It is found in the cytoplasm. The protein localises to the secreted. It carries out the reaction L-homoserine + NADP(+) = L-aspartate 4-semialdehyde + NADPH + H(+). Its pathway is amino-acid biosynthesis; L-methionine biosynthesis via de novo pathway; L-homoserine from L-aspartate: step 3/3. It participates in amino-acid biosynthesis; L-threonine biosynthesis; L-threonine from L-aspartate: step 3/5. Feedback inhibition by threonine. Activated by sodium ions. In terms of biological role, catalyzes the conversion of L-aspartate-beta-semialdehyde (L-Asa) to L-homoserine (L-Hse), the third step in the biosynthesis of threonine and methionine from aspartate. Utilizes NADPH but not NADH as coenzyme. The polypeptide is Homoserine dehydrogenase (hom) (Bacillus subtilis (strain 168)).